A 398-amino-acid polypeptide reads, in one-letter code: Phosphoglycerate kinase (398 aa).

Substrate is bound by residues 20–22 (DLN), Arg35, 58–61 (HLGR), Arg118, and Arg155. ATP is bound by residues Lys206, Gly295, Glu326, and 354–357 (GGDS).

This sequence belongs to the phosphoglycerate kinase family. As to quaternary structure, monomer.

It is found in the cytoplasm. The enzyme catalyses (2R)-3-phosphoglycerate + ATP = (2R)-3-phospho-glyceroyl phosphate + ADP. It functions in the pathway carbohydrate degradation; glycolysis; pyruvate from D-glyceraldehyde 3-phosphate: step 2/5. The protein is Phosphoglycerate kinase of Onion yellows phytoplasma (strain OY-M).